The chain runs to 416 residues: MSEQDEVPSEDRRKYEFRKVIEELKDYEGSGTQLVTIYIPPDKQISDVVAHVTQEHSEASNIKSKQTRTNVQDALTSIKDRLRYYDTFPPDNGMVVFSGAVDSGGGRTDMVTEVLESPPQPIESFRYHCDSAFLTEPLAEMLGDKGLYGLIVLDRRESNVGWLKGKRVQPVKSAESLVPGKQRKGGQSAQRFARLRLEAIDNFYQEVAGMADDLFVPKRHEIDGILVGGPSPTKDEFLDGDYLHHELQDKVLGKFDVSYTDESGLSDLVDAGQAALAEADLMDDKSDMEEFFEELNGGKLATYGFEQTRRNLIMGSVDRLLVSEDLREDVVIYECPNDHEEYETIDRRNTSPEHTCSDCGEEATEVDREDAIDHLMSIADQRGTETHFISTDFEKGEQLLTAFGGYAGILRYSTGV.

The protein belongs to the eukaryotic release factor 1 family. Heterodimer of two subunits, one of which binds GTP.

The protein resides in the cytoplasm. Its function is as follows. Directs the termination of nascent peptide synthesis (translation) in response to the termination codons UAA, UAG and UGA. This is Peptide chain release factor subunit 1 from Halobacterium salinarum (strain ATCC 29341 / DSM 671 / R1).